Here is a 715-residue protein sequence, read N- to C-terminus: Polyribonucleotide nucleotidyltransferase (715 aa).

Mg(2+) contacts are provided by Asp-485 and Asp-491. In terms of domain architecture, KH spans 552–611; the sequence is PRIHTMKIDPKKIKDVIGKGGAVIRALTEETGTSIDIDDDGTVKIAATDNNAAKAVMARI. An S1 motif domain is found at 621–689; sequence NAIYKGKVTR…RQNRIRLTMK (69 aa). Positions 695–715 are disordered; the sequence is TPVAENVTEEAEVSSEQQAEI.

This sequence belongs to the polyribonucleotide nucleotidyltransferase family. In terms of assembly, component of the RNA degradosome, which is a multiprotein complex involved in RNA processing and mRNA degradation. The cofactor is Mg(2+).

It localises to the cytoplasm. It catalyses the reaction RNA(n+1) + phosphate = RNA(n) + a ribonucleoside 5'-diphosphate. Involved in mRNA degradation. Catalyzes the phosphorolysis of single-stranded polyribonucleotides processively in the 3'- to 5'-direction. The chain is Polyribonucleotide nucleotidyltransferase from Actinobacillus pleuropneumoniae serotype 7 (strain AP76).